The following is a 390-amino-acid chain: Chorismate synthase (390 aa).

Arg39 and Arg45 together coordinate NADP(+). FMN is bound by residues 132–134, 253–254, Gly298, 313–317, and Arg339; these read RSS, NA, and KPIPT.

The protein belongs to the chorismate synthase family. Homotetramer. FMNH2 is required as a cofactor.

The enzyme catalyses 5-O-(1-carboxyvinyl)-3-phosphoshikimate = chorismate + phosphate. The protein operates within metabolic intermediate biosynthesis; chorismate biosynthesis; chorismate from D-erythrose 4-phosphate and phosphoenolpyruvate: step 7/7. Its function is as follows. Catalyzes the anti-1,4-elimination of the C-3 phosphate and the C-6 proR hydrogen from 5-enolpyruvylshikimate-3-phosphate (EPSP) to yield chorismate, which is the branch point compound that serves as the starting substrate for the three terminal pathways of aromatic amino acid biosynthesis. This reaction introduces a second double bond into the aromatic ring system. The polypeptide is Chorismate synthase (Bacillus velezensis (strain DSM 23117 / BGSC 10A6 / LMG 26770 / FZB42) (Bacillus amyloliquefaciens subsp. plantarum)).